Here is a 348-residue protein sequence, read N- to C-terminus: D-fructose 1,6-bisphosphatase class 2/sedoheptulose 1,7-bisphosphatase 2 (348 aa).

Mn(2+)-binding residues include D33, E57, D97, and E100. Residues 100–102 (EGT), Y131, 176–178 (RER), and 198–200 (DGD) each bind substrate. E225 serves as a coordination point for Mn(2+).

Belongs to the FBPase class 2 family. Homotetramer.

It carries out the reaction beta-D-fructose 1,6-bisphosphate + H2O = beta-D-fructose 6-phosphate + phosphate. It catalyses the reaction D-sedoheptulose 1,7-bisphosphate + H2O = D-sedoheptulose 7-phosphate + phosphate. The protein operates within carbohydrate biosynthesis; Calvin cycle. In terms of biological role, catalyzes the hydrolysis of fructose 1,6-bisphosphate (Fru 1,6-P2) and sedoheptulose 1,7-bisphosphate (Sed 1,7-P2) to fructose 6-phosphate and sedoheptulose 7-phosphate, respectively. The protein is D-fructose 1,6-bisphosphatase class 2/sedoheptulose 1,7-bisphosphatase 2 of Acaryochloris marina (strain MBIC 11017).